Here is a 218-residue protein sequence, read N- to C-terminus: Vacuolar protein-sorting-associated protein 37 homolog 2 (218 aa).

Residues 1–51 (MFNFWGSKEQQQGQSRPSPEASATPWYSPSLVTSPSSSRPQTSGQIPSHVS) are disordered. The span at 8-17 (KEQQQGQSRP) shows a compositional bias: polar residues. Residues 28–40 (SPSLVTSPSSSRP) show a composition bias toward low complexity. A VPS37 C-terminal domain is found at 137-218 (QEKLNELENQ…HLAAKTSSIG (82 aa)).

It belongs to the VPS37 family. As to quaternary structure, component of the endosomal sorting required for transport complex I (ESCRT-I), composed of ELC, VPS28 and VPS37. Interacts with ELC.

It is found in the endosome. Component of the ESCRT-I complex (endosomal sorting complex required for transport I), a regulator of vesicular trafficking process. Required for the sorting of endocytic ubiquitinated cargos into multivesicular bodies (MVBs). This Arabidopsis thaliana (Mouse-ear cress) protein is Vacuolar protein-sorting-associated protein 37 homolog 2 (VPS37-2).